Reading from the N-terminus, the 311-residue chain is Delta(1)-pyrroline-2-carboxylate reductase 2 (311 aa).

It belongs to the ornithine cyclodeaminase/mu-crystallin family.

The catalysed reaction is L-proline + NAD(+) = 1-pyrroline-2-carboxylate + NADH + H(+). It catalyses the reaction L-proline + NADP(+) = 1-pyrroline-2-carboxylate + NADPH + H(+). In terms of biological role, catalyzes the reduction of Delta(1)-pyrroline-2-carboxylate (Pyr2C) to L-proline, using preferentially NADPH over NADH as the electron donor. May be involved in a degradation pathway that converts trans-3-hydroxy-L-proline (t3LHyp) to L-proline. This is Delta(1)-pyrroline-2-carboxylate reductase 2 from Burkholderia ambifaria (strain ATCC BAA-244 / DSM 16087 / CCUG 44356 / LMG 19182 / AMMD) (Burkholderia cepacia (strain AMMD)).